Reading from the N-terminus, the 161-residue chain is RNA pyrophosphohydrolase (161 aa).

In terms of domain architecture, Nudix hydrolase spans 12–154 (PYRIGVGMVI…KRKLYKAVIN (143 aa)). A Nudix box motif is present at residues 46–67 (GGIILGETYSKAVLREMKEEIG).

This sequence belongs to the Nudix hydrolase family. RppH subfamily. Requires a divalent metal cation as cofactor.

In terms of biological role, accelerates the degradation of transcripts by removing pyrophosphate from the 5'-end of triphosphorylated RNA, leading to a more labile monophosphorylated state that can stimulate subsequent ribonuclease cleavage. The chain is RNA pyrophosphohydrolase from Orientia tsutsugamushi (strain Boryong) (Rickettsia tsutsugamushi).